Here is a 51-residue protein sequence, read N- to C-terminus: Basic phospholipase A2 homolog BmatTX-I (51 aa).

C28 and C44 are oxidised to a cystine.

In terms of assembly, monomer. Expressed by the venom gland.

It is found in the secreted. Snake venom phospholipase A2 homolog that lacks enzymatic activity. Shows high myotoxic activity, neutrophile activation (demonstrated by activation induction of IL-1beta production), slight cytotoxicity against Jurkat (leukemia T) and SK-BR-3 (breast adenocarcinoma) tumor cell lines, and slight antiparasitic activity against promastigote forms of Leishmania amazonensis. A model of myotoxic mechanism has been proposed: an apo Lys49-PLA2 is activated by the entrance of a hydrophobic molecule (e.g. fatty acid) at the hydrophobic channel of the protein leading to a reorientation of a monomer. This reorientation causes a transition between 'inactive' to 'active' states, causing alignment of C-terminal and membrane-docking sites (MDoS) side-by-side and putting the membrane-disruption sites (MDiS) in the same plane, exposed to solvent and in a symmetric position for both monomers. The MDoS region stabilizes the toxin on membrane by the interaction of charged residues with phospholipid head groups. Subsequently, the MDiS region destabilizes the membrane with penetration of hydrophobic residues. This insertion causes a disorganization of the membrane, allowing an uncontrolled influx of ions (i.e. calcium and sodium), and eventually triggering irreversible intracellular alterations and cell death. This is Basic phospholipase A2 homolog BmatTX-I from Bothrops mattogrossensis (Pitviper).